The chain runs to 501 residues: TNF receptor-associated factor 2 (501 aa).

A2 is modified (N-acetylalanine). Phosphoserine is present on S5. Residue T7 is modified to Phosphothreonine. A Phosphoserine modification is found at S11. Phosphothreonine is present on T22. Residue K31 forms a Glycyl lysine isopeptide (Lys-Gly) (interchain with G-Cter in ubiquitin) linkage. An RING-type zinc finger spans residues 34-73; sequence CSACRNVLRRPFQAQCGHRYCSFCLASILSSGPQNCAACV. The residue at position 117 (T117) is a Phosphothreonine; by PKC. 2 consecutive TRAF-type zinc fingers follow at residues 124–180 and 177–233; these read CHEG…AHHE and AHHE…EKQQ. Positions 283 to 293 are important for interaction with BIRC2 and BIRC3; sequence ENIVCVLNREV. Residues 299 to 348 are a coiled coil; it reads TAEACSRQHRLDQDKIEALSSKVQQLERSIGLKDLAMADLEQKVLEMEAS. K320 participates in a covalent cross-link: Glycyl lysine isopeptide (Lys-Gly) (interchain with G-Cter in ubiquitin). Positions 351 to 496 constitute an MATH domain; the sequence is DGVFIWKISD…DDAIFIKAIV (146 aa).

It belongs to the TNF receptor-associated factor family. A subfamily. In terms of assembly, homotrimer. Heterotrimer with TRAF1. Heterotrimer with TRAF3 (via TRAF domain). The domain containing the RING-type and the first TRAF-type zinc finger can also form homodimers (in vitro). Interacts with TNFRSF1B/TNFR2. Interacts with TNFRSF5/CD40. Interacts with TNFRSF4, TNFRSF7/CD27, TNFRSF8/CD30, TNFRSF9/CD137, TNFRSF11A/RANK, TNFRSF13B/TACI, TNFRSF14, TNFRSF16/NGFR, TNFRSF17/BCMA, TNFRSF18/AITR, TNFRSF19/TROY, TNFRSF19L/RELT and EDAR. Stimulation of TNF-alpha receptor TNFRSF1A leads to the formation of two distinct signaling complexes. Plasma membrane-bound complex I is composed of TNFRSF1A, TRADD, RIPK1, TRAF2 and BIRC2/c-IAP1 or BIRC3 which interacts with CHUCK/IKK-alpha, IKBKB/IKK-beta and IKBKG/IKK-gamma promoting cell survival. Subsequently, TRADD, RIPK1 and TRAF2 dissociate from TNFRSF1A and form cytoplasmic complex II with FADD and caspase CASP8 promoting cell apoptosis. Interacts with TRADD. Identified in a complex with TNFRSF1A, RIPK1 and IKBKB/IKK-beta. Interacts with RIPK2. Interacts with BIRC2 and BIRC3 N-terminus; a single BIRC2 or BIRC3 molecule interacts with a heterotrimer formed by TRAF1 and TRAF2, or a TRAF2 homotrimer. Identified in a complex composed of TRAF2, TRAF3, BIRC2 and BIRC3. Interacts with BIRC2; the interaction promotes BIRC2 stability. Interaction with BIRC2 and/or BIRC3 is essential for ubiquitination of IKBKE, degradation of NFKBIA and activation of NF-kappa-B. Within complex I, phosphorylated TRAF2 interacts (via 'Lys-63'-linked polyubiquitin chains) with CHUCK/IKK-alpha, IKBKB/IKK-beta, IKBKG/IKK-gamma TAB2, TAB3 and TAK1 in response to TNF-alpha stimulation. Within complex I, interacts with UXT isoform 1 (via TPQE motif); the interaction prevents the recruitment of FADD and CASP8/caspase 8 to complex I. Forms a complex composed of TNFRSF8/CD30 or TNFRSF1B/TNFR2, and TRAF1, TRAF2 and E3 ligase TRAIP. Within the complex, interacts with TRAIP; the interaction inhibits TRAF2-mediated NF-kappa B activation. Component of a complex composed of TANK and TBK1. Interacts with TRPC4AP. Interacts with MAP3K1/MEKK1, MAP3K5/ASK1 and MAP3K11/MLK3 in response to TNF-alpha stimulation; the interaction leads to JNK activation and interaction with MAP3K5 is inhibited by PRMT1. Component of a complex composed of MAP3K14/NIK BIRC3 and TRAF3; the interaction leads to BIRC2/3-mediated ubiquitination of TRAF3 upon CD40 engagement in a TRAF2-dependent manner. Interacts with MAP3K14/NIK in response to TNF-alpha stimulation; the interaction leads to NF-kappa B activation. Interacts with PEG3; the interaction may promote TRAF2-mediated NF-kappa B activation. Interacts with HIVEP3; the interaction may inhibit TNF-alpha-TRAF2-mediated NF-kappa B and JNK activation. Interacts with TANK/ITRAF; the interaction prevents interaction between TNFRSF1B/TNFR2 and TRAF2. Interacts with deubiquitinating enzyme CYLD; the interaction results in the deubiquitination and inactivation of TRAF2. Interacts with SIAH2; the interaction leads to TRAF2 ubiquitination and degradation. Interacts with E2 conjugating enzyme UBE2N/Ubc13, E3 ligase ITCH and RNF11 in response to TNF-alpha stimulation. Interacts with ubiquitin-editing enzyme TNFAIP3/A20 in response to TNF-alpha stimulation; the interaction promotes TRAF2 dissociation from UBE2N/Ubc13, ITCH, RNF11 and TAX1BP1 and prevents prolonged TRAF-2 ubiquitination. Interacts with TAX1BP1 in response to TNF-alpha stimulation; the interaction promotes TRAF2 dissociation from UBE2N/Ubc13 and TNFAIP3/A20, and prevents prolonged TRAF-2 ubiquitination. Interacts (via C-terminus) with EIF2AK2/PKR (via the kinase catalytic domain). Interacts with deubiquitinating enzyme USP48. Interacts with PTPN2; probably involved in TNF-mediated signaling. Interacts with Toll-like receptor TLR4/3 adapter TICAM1/TRIF; the interaction may promote TICAM1 ubiquitination. Interacts with kinase/endoribonuclease ERN1/IRE1 and DAB2IP in response to ER stress; the interaction requires DAB2IP. Interacts with ERN1/IRE1 and TAOK3 in response to ER stress; the interaction may promote TRAF2 phosphorylation. Interacts (via zinc fingers) with DAB2IP (via C-terminus PER domain)in response to TNF-alpha stimulation. Interacts with CASP8AP2/FLASH. Interacts with NFATC2IP; the interaction may repress IL-4 production in T cells. Interacts with kinase CDK9. Interacts with sphingosine kinase 1 SPHK1. Interacts with kinase TNIK. Interacts with TRAFD1. Interacts with DNA phosphodiesterase TDP2. Interacts with MAVS/IPS1. Interacts with CARD14. Interacts with Epstein-Barr virus LMP1/BNFL1. Interacts with GPS2. Interacts with XPNPEP3. Interacts with RIPK3. Interacts with RELL2. Interacts with LRRC19. Interacts with GAPDH; promoting TRAF2 ubiquitination. Post-translationally, phosphorylated at several serine residues within the first 128 amino acid residues. Phosphorylated at Thr-117 in response to signaling via TNF and TNFRSF1A. Phosphorylation at Thr-117 is required for 'Lys-63'-linked polyubiquitination, but not for 'Lys-48'-linked polyubiquitination. Phosphorylation at Thr-117 is important for interaction with IKKA and IKKB, activation of IKK and subsequent activation of NF-kappa-B. In terms of processing, undergoes both 'Lys-48'-linked and 'Lys-63'-linked polyubiquitination. Polyubiquitinated via 'Lys-63'-linked ubiquitin in response to TNF signaling; this requires prior phosphorylation at Thr-117. 'Lys-63'-linked polyubiquitination promotes TRAF2-mediated activation of NF-kappa-B. Can be polyubiquitinated at several Lys residues via 'Lys-48'-linked ubiquitin chains in response to TNF signaling, leading to proteasomal degradation. Autoubiquitinated, leading to its subsequent proteasomal degradation. Polyubiquitinated by BIRC2 and SIAH2, leading to its subsequent proteasomal degradation. Deubiquitinated by CYLD, a protease that specifically cleaves 'Lys-63'-linked polyubiquitin chains. Ubiquination is inhibited by LRRC19; inhibits proteasomal degradation. Ubiquitinated at Lys-320 by the SCF(FBXL2) complex, leading to its degradation by the proteasome. Ubiquitinated by E3 ubiquitin-protein ligase complex containing FBXO7; leading to repression of NF-kappa-B signaling.

It localises to the cytoplasm. It catalyses the reaction S-ubiquitinyl-[E2 ubiquitin-conjugating enzyme]-L-cysteine + [acceptor protein]-L-lysine = [E2 ubiquitin-conjugating enzyme]-L-cysteine + N(6)-ubiquitinyl-[acceptor protein]-L-lysine.. It functions in the pathway protein modification; protein ubiquitination. With respect to regulation, has very low E3 ubiquitin ligase activity in the absence of sphingosine-1-phosphate. E3 ubiquitin ligase activity is strongly activated by cytoplasmic sphingosine-1-phosphate. E3 ubiquitin-protein ligase that regulates activation of NF-kappa-B and JNK and plays a central role in the regulation of cell survival and apoptosis. Catalyzes 'Lys-63'-linked ubiquitination of target proteins, such as BIRC3, IKBKE, MLST8, RIPK1 and TICAM1. Is an essential constituent of several E3 ubiquitin-protein ligase complexes, where it promotes the ubiquitination of target proteins by bringing them into contact with other E3 ubiquitin ligases. Regulates BIRC2 and BIRC3 protein levels by inhibiting their autoubiquitination and subsequent degradation; this does not depend on the TRAF2 RING-type zinc finger domain. Plays a role in mediating activation of NF-kappa-B by EIF2AK2/PKR. In complex with BIRC2 or BIRC3, promotes ubiquitination of IKBKE. Acts as a regulator of mTORC1 and mTORC2 assembly by mediating 'Lys-63'-linked ubiquitination of MLST8, thereby inhibiting formation of the mTORC2 complex, while facilitating assembly of the mTORC1 complex. Required for normal antibody isotype switching from IgM to IgG. In Homo sapiens (Human), this protein is TNF receptor-associated factor 2.